The sequence spans 457 residues: Siroheme synthase (457 aa).

Positions 1–204 (MDHLPIFCQL…NDQKAITETT (204 aa)) are precorrin-2 dehydrogenase /sirohydrochlorin ferrochelatase. NAD(+)-binding positions include 22–23 (DV) and 43–44 (LA). Ser128 carries the post-translational modification Phosphoserine. The tract at residues 216-457 (GEVVLVGAGP…RDKLNWFSNH (242 aa)) is uroporphyrinogen-III C-methyltransferase. Pro225 contributes to the S-adenosyl-L-methionine binding site. Asp248 functions as the Proton acceptor in the catalytic mechanism. Lys270 acts as the Proton donor in catalysis. Residues 301-303 (GGD), Ile306, 331-332 (TA), Met382, and Gly411 contribute to the S-adenosyl-L-methionine site.

The protein in the N-terminal section; belongs to the precorrin-2 dehydrogenase / sirohydrochlorin ferrochelatase family. This sequence in the C-terminal section; belongs to the precorrin methyltransferase family.

The enzyme catalyses uroporphyrinogen III + 2 S-adenosyl-L-methionine = precorrin-2 + 2 S-adenosyl-L-homocysteine + H(+). It carries out the reaction precorrin-2 + NAD(+) = sirohydrochlorin + NADH + 2 H(+). It catalyses the reaction siroheme + 2 H(+) = sirohydrochlorin + Fe(2+). Its pathway is cofactor biosynthesis; adenosylcobalamin biosynthesis; precorrin-2 from uroporphyrinogen III: step 1/1. It functions in the pathway cofactor biosynthesis; adenosylcobalamin biosynthesis; sirohydrochlorin from precorrin-2: step 1/1. It participates in porphyrin-containing compound metabolism; siroheme biosynthesis; precorrin-2 from uroporphyrinogen III: step 1/1. The protein operates within porphyrin-containing compound metabolism; siroheme biosynthesis; siroheme from sirohydrochlorin: step 1/1. Its pathway is porphyrin-containing compound metabolism; siroheme biosynthesis; sirohydrochlorin from precorrin-2: step 1/1. In terms of biological role, multifunctional enzyme that catalyzes the SAM-dependent methylations of uroporphyrinogen III at position C-2 and C-7 to form precorrin-2 via precorrin-1. Then it catalyzes the NAD-dependent ring dehydrogenation of precorrin-2 to yield sirohydrochlorin. Finally, it catalyzes the ferrochelation of sirohydrochlorin to yield siroheme. This chain is Siroheme synthase, found in Shigella dysenteriae serotype 1 (strain Sd197).